The following is a 329-amino-acid chain: MHNLTLFESGGDNVSCGGSSLGCPNGSSLAPLPLPQPLAVAVPVVYGVICAVGLAGNSAVLYVLLRTPRMKTVTNVFILNLAIADELFTLVLPINIADFLLRRWPFGEVMCKLIVAVDQYNTFSSLYFLAVMSADRYLVVLATAESRRVSGRTYGAARAVSLAVWALVTLVVLPFAVFARLDEEQGRRQCVLVFPQPEAFWWRASRLYTLVLGFAIPVTTICALYTTLLCRLRAIQLDSHAKALDRAKKRVTLLVAAILAVCLLCWTPYHLSTIVALTTDLPQTPLVIGISYFITSLSYANSCLNPFLYAFLDDSFRRSLRQLVSCRSA.

Residues 1 to 43 lie on the Extracellular side of the membrane; that stretch reads MHNLTLFESGGDNVSCGGSSLGCPNGSSLAPLPLPQPLAVAVP. Residues Asn3, Asn13, and Asn25 are each glycosylated (N-linked (GlcNAc...) asparagine). A helical transmembrane segment spans residues 44–64; the sequence is VVYGVICAVGLAGNSAVLYVL. Over 65-75 the chain is Cytoplasmic; it reads LRTPRMKTVTN. A helical membrane pass occupies residues 76-96; it reads VFILNLAIADELFTLVLPINI. Residues 97 to 112 lie on the Extracellular side of the membrane; that stretch reads ADFLLRRWPFGEVMCK. Cys111 and Cys190 are joined by a disulfide. Residues 113 to 133 traverse the membrane as a helical segment; it reads LIVAVDQYNTFSSLYFLAVMS. Topologically, residues 134–158 are cytoplasmic; the sequence is ADRYLVVLATAESRRVSGRTYGAAR. The helical transmembrane segment at 159-179 threads the bilayer; the sequence is AVSLAVWALVTLVVLPFAVFA. Over 180–209 the chain is Extracellular; the sequence is RLDEEQGRRQCVLVFPQPEAFWWRASRLYT. The helical transmembrane segment at 210 to 230 threads the bilayer; the sequence is LVLGFAIPVTTICALYTTLLC. Topologically, residues 231 to 250 are cytoplasmic; sequence RLRAIQLDSHAKALDRAKKR. Residues 251 to 271 traverse the membrane as a helical segment; the sequence is VTLLVAAILAVCLLCWTPYHL. Residues 272-289 lie on the Extracellular side of the membrane; sequence STIVALTTDLPQTPLVIG. A helical transmembrane segment spans residues 290-312; sequence ISYFITSLSYANSCLNPFLYAFL. The Cytoplasmic segment spans residues 313–329; that stretch reads DDSFRRSLRQLVSCRSA.

Belongs to the G-protein coupled receptor 1 family.

It localises to the cell membrane. In terms of biological role, interacts specifically with a number of opioid ligands. Receptor for neuropeptides B and W, which may be involved in neuroendocrine system regulation, food intake and the organization of other signals. The protein is Neuropeptides B/W receptor type 1 (Npbwr1) of Mus musculus (Mouse).